A 285-amino-acid polypeptide reads, in one-letter code: Glutamate racemase (285 aa).

Substrate contacts are provided by residues 30-31 (DS) and 62-63 (YG). Cys94 functions as the Proton donor/acceptor in the catalytic mechanism. Position 95–96 (95–96 (NT)) interacts with substrate. Cys206 acts as the Proton donor/acceptor in catalysis. 207 to 208 (TH) contacts substrate.

It belongs to the aspartate/glutamate racemases family.

The catalysed reaction is L-glutamate = D-glutamate. The protein operates within cell wall biogenesis; peptidoglycan biosynthesis. In terms of biological role, provides the (R)-glutamate required for cell wall biosynthesis. The chain is Glutamate racemase from Pectobacterium carotovorum subsp. carotovorum (strain PC1).